Reading from the N-terminus, the 50-residue chain is MARYRCCRSQSRSRCRPRRRRCRTRRRRCCRRRRRRVCCRRYTVVRCRRR.

It belongs to the protamine P1 family. Testis.

The protein localises to the nucleus. It localises to the chromosome. Functionally, protamines substitute for histones in the chromatin of sperm during the haploid phase of spermatogenesis. They compact sperm DNA into a highly condensed, stable and inactive complex. This Natalus stramineus (Mexican funnel-eared bat) protein is Sperm protamine P1 (PRM1).